A 64-amino-acid chain; its full sequence is U9-ctenitoxin-Pr1a (64 aa).

Intrachain disulfides connect cysteine 3/cysteine 15, cysteine 9/cysteine 24, cysteine 14/cysteine 47, cysteine 34/cysteine 55, and cysteine 49/cysteine 61.

In terms of tissue distribution, expressed by the venom gland.

The protein localises to the secreted. Functionally, non-toxic to mice and insects. The protein is U9-ctenitoxin-Pr1a of Phoneutria reidyi (Brazilian Amazonian armed spider).